The chain runs to 325 residues: MHPAFSVIFLTTLLGAGQGLYLAMVTGQLYAVARFLPAQADQFYAVGSLVALLLLIAGLGASFFHLGRPERAWRAAAMWRTSWLSREVIVLPIVMALVFAYGVAHWFEWTQPLFQVGAALQVDLTLLLGVLGTIASLALFVCTAMIYAAVRFLQEWHTPLTVSNFLFLGAASGFMLAAAYSAYIGNPLVTFYGTWAVILTLVGLASRLAHLRRNARLKHKSTVQTAIGVRHASVVQKAQGATGGSFNTREFFHGRSQSLLERLRTVYLVLVFPIPVLLIGLSYLIGSSNLPIIAFFVQFAGLLIERWSFFAEARHPQNLYYQSVA.

8 helical membrane-spanning segments follow: residues 5–25, 43–63, 87–107, 126–146, 165–185, 186–206, 266–286, and 290–310; these read FSVI…LAMV, FYAV…GASF, EVIV…AHWF, LLLG…TAMI, FLFL…AYIG, NPLV…GLAS, VYLV…YLIG, and LPII…WSFF.

Belongs to the DmsC family. As to quaternary structure, forms a heterotrimeric membrane-bound complex composed of a catalytic heterodimer (SoeAB) and a membrane anchor protein (SoeC).

It localises to the cell inner membrane. Part of the SoeABC complex that catalyzes the oxidation of sulfite to sulfate. SoeC probably anchors and stabilizes the catalytic subunits. This is Sulfite dehydrogenase subunit C from Allochromatium vinosum (strain ATCC 17899 / DSM 180 / NBRC 103801 / NCIMB 10441 / D) (Chromatium vinosum).